We begin with the raw amino-acid sequence, 97 residues long: Defensin-like protein 246 (97 aa).

The first 24 residues, 1–24, serve as a signal peptide directing secretion; it reads MKFVAIFLVTCVLFSLFPSHLSQG. 4 disulfide bridges follow: C39/C96, C50/C79, C58/C89, and C77/C91.

This sequence belongs to the DEFL family. In terms of tissue distribution, flower buds and stems.

It is found in the secreted. The chain is Defensin-like protein 246 (SCRL5) from Arabidopsis thaliana (Mouse-ear cress).